We begin with the raw amino-acid sequence, 238 residues long: Immunoglobulin superfamily member 6 (238 aa).

The N-terminal stretch at 1-27 (MGPVSTSRRGLRLGISLILLQVGVVGA) is a signal peptide. The Extracellular portion of the chain corresponds to 28-153 (CTVSVLQPGY…RLFSREVHSL (126 aa)). Residues 30-134 (VSVLQPGYLE…EPVPTAKQTG (105 aa)) form the Ig-like C2-type domain. The cysteines at positions 51 and 118 are disulfide-linked. The chain crosses the membrane as a helical span at residues 154 to 174 (LIVLLALLAVYVTGVCVIFIV). Topologically, residues 175-238 (LFRSKSNTPR…RKALPSPGRP (64 aa)) are cytoplasmic. Residues 215-230 (ETSHQPEQDGNYENRK) are compositionally biased toward basic and acidic residues. Residues 215 to 238 (ETSHQPEQDGNYENRKALPSPGRP) are disordered.

The protein resides in the membrane. This Rattus norvegicus (Rat) protein is Immunoglobulin superfamily member 6 (Igsf6).